The primary structure comprises 565 residues: Phosphomethylpyrimidine synthase (565 aa).

Residues N203, M232, Y261, H297, 317-319, 358-361, and E397 contribute to the substrate site; these read SRG and DGLR. H401 lines the Zn(2+) pocket. Residue Y424 coordinates substrate. Residue H465 coordinates Zn(2+). 3 residues coordinate [4Fe-4S] cluster: C541, C544, and C549.

The protein belongs to the ThiC family. The cofactor is [4Fe-4S] cluster.

It catalyses the reaction 5-amino-1-(5-phospho-beta-D-ribosyl)imidazole + S-adenosyl-L-methionine = 4-amino-2-methyl-5-(phosphooxymethyl)pyrimidine + CO + 5'-deoxyadenosine + formate + L-methionine + 3 H(+). Its pathway is cofactor biosynthesis; thiamine diphosphate biosynthesis. Catalyzes the synthesis of the hydroxymethylpyrimidine phosphate (HMP-P) moiety of thiamine from aminoimidazole ribotide (AIR) in a radical S-adenosyl-L-methionine (SAM)-dependent reaction. The protein is Phosphomethylpyrimidine synthase of Bacteroides thetaiotaomicron (strain ATCC 29148 / DSM 2079 / JCM 5827 / CCUG 10774 / NCTC 10582 / VPI-5482 / E50).